The following is a 184-amino-acid chain: V-type proton ATPase subunit E (184 aa).

The protein belongs to the V-ATPase E subunit family.

Produces ATP from ADP in the presence of a proton gradient across the membrane. The chain is V-type proton ATPase subunit E from Finegoldia magna (strain ATCC 29328 / DSM 20472 / WAL 2508) (Peptostreptococcus magnus).